We begin with the raw amino-acid sequence, 122 residues long: Large ribosomal subunit protein uL14 (122 aa).

This sequence belongs to the universal ribosomal protein uL14 family. In terms of assembly, part of the 50S ribosomal subunit. Forms a cluster with proteins L3 and L19. In the 70S ribosome, L14 and L19 interact and together make contacts with the 16S rRNA in bridges B5 and B8.

Functionally, binds to 23S rRNA. Forms part of two intersubunit bridges in the 70S ribosome. The protein is Large ribosomal subunit protein uL14 of Shewanella sp. (strain ANA-3).